Consider the following 612-residue polypeptide: Indole-3-acetic acid-amido synthetase GH3.5 (612 aa).

This sequence belongs to the IAA-amido conjugating enzyme family.

Its function is as follows. Catalyzes the synthesis of indole-3-acetic acid (IAA)-amino acid conjugates, providing a mechanism for the plant to cope with the presence of excess auxin. Strongly reactive with Glu, Gln, Trp, Asp, Ala, Leu, Phe, Gly, Tyr, Met, Ile and Val. Little or no product formation with His, Ser, Thr, Arg, Lys, or Cys. Also active on pyruvic and butyric acid analogs of IAA, PAA and the synthetic auxin naphthaleneacetic acid (NAA). The two chlorinated synthetic auxin herbicides 2,4-D and 3,6-dichloro-o-anisic acid (dicamba) cannot be used as substrates. In Arabidopsis thaliana (Mouse-ear cress), this protein is Indole-3-acetic acid-amido synthetase GH3.5 (GH3.5).